The primary structure comprises 277 residues: MKTLKVVATPIGNIQEISERAKKALQDCEVLFCEDSRVTRKMLDLLNIDCKQKKFVINNSFKEKQNLTFAEEFITNFKCCLVSDAGYPSLSDPGNEMINWIISKNKEIRIEVINGPSALMCGLITSGFKTTPLLFLGFLSHKQNQLKNYLSTYQNQKSTIVFFEAVHRLENTLETVKNVFKNNDVFIGRELTKLHESHYWFNTSENTLPDITLKGEFVIVIDNQNINHQTLSSNQYLVYEIKKLMDIGVKLKDACNYLAKKMHLKSSMLYTLFHESI.

Belongs to the methyltransferase superfamily. RsmI family.

The protein localises to the cytoplasm. It carries out the reaction cytidine(1402) in 16S rRNA + S-adenosyl-L-methionine = 2'-O-methylcytidine(1402) in 16S rRNA + S-adenosyl-L-homocysteine + H(+). In terms of biological role, catalyzes the 2'-O-methylation of the ribose of cytidine 1402 (C1402) in 16S rRNA. The polypeptide is Ribosomal RNA small subunit methyltransferase I (Mycoplasma genitalium (strain ATCC 33530 / DSM 19775 / NCTC 10195 / G37) (Mycoplasmoides genitalium)).